A 156-amino-acid chain; its full sequence is Calmodulin (156 aa).

An N-acetylserine modification is found at serine 2. 4 EF-hand domains span residues 15-50 (EQIA…LGQN), 51-86 (PTEA…KMKD), 88-123 (DSEE…LGEK), and 124-156 (LTDE…MTSK). Ca(2+) contacts are provided by aspartate 28, aspartate 30, aspartate 32, threonine 34, glutamate 39, aspartate 64, aspartate 66, asparagine 68, threonine 70, glutamate 75, aspartate 101, aspartate 103, asparagine 105, and glutamate 112. Position 123 is an N6,N6,N6-trimethyllysine (lysine 123). Ca(2+)-binding residues include aspartate 137, aspartate 139, aspartate 141, glutamine 143, and glutamate 148.

It belongs to the calmodulin family.

Calmodulin mediates the control of a large number of enzymes, ion channels and other proteins by Ca(2+). Among the enzymes to be stimulated by the calmodulin-Ca(2+) complex are a number of protein kinases and phosphatases. The protein is Calmodulin of Strongylocentrotus intermedius (Sea urchin).